The following is a 138-amino-acid chain: Small ribosomal subunit protein uS11c (138 aa).

Belongs to the universal ribosomal protein uS11 family. As to quaternary structure, part of the 30S ribosomal subunit.

It is found in the plastid. The polypeptide is Small ribosomal subunit protein uS11c (Cuscuta obtusiflora (Peruvian dodder)).